Here is a 530-residue protein sequence, read N- to C-terminus: uncharacterized protein (530 aa).

A disordered region spans residues 1-33; sequence MNNMSLKFPDIAINSSESSDDEDPSSKNEKKDG. Residues 24–33 show a composition bias toward basic and acidic residues; it reads PSSKNEKKDG. 12 helical membrane-spanning segments follow: residues 83–103, 124–144, 147–167, 181–201, 211–231, 244–264, 323–343, 346–366, 375–395, 404–424, 436–456, and 471–491; these read FFILPIMCITYGMQYLDKTAV, WLSTIFYLGYMIAQYPAGYLL, FPISYFMFIAAFLWSACVLLM, FFSGVFEGCVNPAFVALTAMW, VVSWYAFNGVAIMVGALLGYG, YPFLVIGAISTAWSFVYLFFP, VTNAMSVFSALIIQGIGYSGI, TLLTLPSGAFAVAGMIASGIF, IPLAMTTSSLTIVGSIMIWKI, VVGVWLFCTISSGNAVILSLL, TVNATMFLFYSIGNIVSPQLF, and SLVSVCLFEGVLALLAFYYIF.

It belongs to the major facilitator superfamily. Allantoate permease family.

The protein resides in the endoplasmic reticulum. The protein localises to the membrane. This is an uncharacterized protein from Schizosaccharomyces pombe (strain 972 / ATCC 24843) (Fission yeast).